A 101-amino-acid chain; its full sequence is Small ribosomal subunit protein uS10 (101 aa).

Belongs to the universal ribosomal protein uS10 family. As to quaternary structure, part of the 30S ribosomal subunit.

Its function is as follows. Involved in the binding of tRNA to the ribosomes. The polypeptide is Small ribosomal subunit protein uS10 (Brachyspira hyodysenteriae (Treponema hyodysenteriae)).